We begin with the raw amino-acid sequence, 347 residues long: Phosphoribosylformylglycinamidine cyclo-ligase (347 aa).

Belongs to the AIR synthase family.

The protein localises to the cytoplasm. The catalysed reaction is 2-formamido-N(1)-(5-O-phospho-beta-D-ribosyl)acetamidine + ATP = 5-amino-1-(5-phospho-beta-D-ribosyl)imidazole + ADP + phosphate + H(+). The protein operates within purine metabolism; IMP biosynthesis via de novo pathway; 5-amino-1-(5-phospho-D-ribosyl)imidazole from N(2)-formyl-N(1)-(5-phospho-D-ribosyl)glycinamide: step 2/2. The protein is Phosphoribosylformylglycinamidine cyclo-ligase of Desulfatibacillum aliphaticivorans.